A 239-amino-acid chain; its full sequence is Segregation and condensation protein A (239 aa).

It belongs to the ScpA family. Component of a cohesin-like complex composed of ScpA, ScpB and the Smc homodimer, in which ScpA and ScpB bind to the head domain of Smc. The presence of the three proteins is required for the association of the complex with DNA.

It localises to the cytoplasm. Participates in chromosomal partition during cell division. May act via the formation of a condensin-like complex containing Smc and ScpB that pull DNA away from mid-cell into both cell halves. This chain is Segregation and condensation protein A, found in Streptococcus suis (strain 98HAH33).